A 126-amino-acid chain; its full sequence is Ribosome-binding factor A (126 aa).

Belongs to the RbfA family. As to quaternary structure, monomer. Binds 30S ribosomal subunits, but not 50S ribosomal subunits or 70S ribosomes.

The protein resides in the cytoplasm. Its function is as follows. One of several proteins that assist in the late maturation steps of the functional core of the 30S ribosomal subunit. Associates with free 30S ribosomal subunits (but not with 30S subunits that are part of 70S ribosomes or polysomes). Required for efficient processing of 16S rRNA. May interact with the 5'-terminal helix region of 16S rRNA. This Geobacillus sp. (strain WCH70) protein is Ribosome-binding factor A.